Consider the following 300-residue polypeptide: UDP-N-acetylenolpyruvoylglucosamine reductase (300 aa).

In terms of domain architecture, FAD-binding PCMH-type spans 29–193 (TGGPADLLVF…LSATFKLRSG (165 aa)). Arginine 172 is an active-site residue. Catalysis depends on serine 222, which acts as the Proton donor. Glutamate 292 is an active-site residue.

The protein belongs to the MurB family. FAD serves as cofactor.

Its subcellular location is the cytoplasm. It carries out the reaction UDP-N-acetyl-alpha-D-muramate + NADP(+) = UDP-N-acetyl-3-O-(1-carboxyvinyl)-alpha-D-glucosamine + NADPH + H(+). The protein operates within cell wall biogenesis; peptidoglycan biosynthesis. Cell wall formation. The chain is UDP-N-acetylenolpyruvoylglucosamine reductase from Pediococcus pentosaceus (strain ATCC 25745 / CCUG 21536 / LMG 10740 / 183-1w).